Reading from the N-terminus, the 42-residue chain is Cytochrome b6-f complex subunit 7 (42 aa).

The chain crosses the membrane as a helical span at residues 19–37 (AVTCIFMTLFGLSLGFALL).

This sequence belongs to the PetM family. As to quaternary structure, the 4 large subunits of the cytochrome b6-f complex are cytochrome b6, subunit IV (17 kDa polypeptide, PetD), cytochrome f and the Rieske protein, while the 4 small subunits are PetG, PetL, PetM and PetN. The complex functions as a dimer.

The protein resides in the plastid. The protein localises to the chloroplast thylakoid membrane. Its function is as follows. Component of the cytochrome b6-f complex, which mediates electron transfer between photosystem II (PSII) and photosystem I (PSI), cyclic electron flow around PSI, and state transitions. The protein is Cytochrome b6-f complex subunit 7 of Thalassiosira pseudonana (Marine diatom).